A 305-amino-acid chain; its full sequence is Putative HTH-type transcriptional regulatory protein Saci_1344 (305 aa).

The HTH cro/C1-type domain maps to 128 to 183 (LREKREEKNMSLGELSQRLGVSRISVYDYEKEDSYVSIEVAEKLIEIFGDEVIGDI). Positions 139–158 (LGELSQRLGVSRISVYDYEK) form a DNA-binding region, H-T-H motif.

This Sulfolobus acidocaldarius (strain ATCC 33909 / DSM 639 / JCM 8929 / NBRC 15157 / NCIMB 11770) protein is Putative HTH-type transcriptional regulatory protein Saci_1344.